A 2189-amino-acid polypeptide reads, in one-letter code: Chromatin modification-related protein eaf-1 (2189 aa).

3 disordered regions span residues 183–400 (VQGS…SGAE), 415–438 (VIGKAGVAGPHGAHSTGGLQTQHP), and 477–601 (EVAK…PPGL). Low complexity predominate over residues 234 to 253 (PTPQTVAPPATAPTSTTKTA). A compositionally biased stretch (basic and acidic residues) spans 260-277 (AGPKDDTVSRGDAEEKAR). Composition is skewed to polar residues over residues 281 to 293 (TITSVNQLLSNGD), 300 to 312 (TLSSPSSTVQSAP), and 319 to 333 (ASASTSPDNEASQSF). Over residues 336–349 (PVSRPEQELRRATT) the composition is skewed to basic and acidic residues. Residues 534-543 (QPQPSSTAPS) show a composition bias toward low complexity. The segment covering 573–583 (ETQARTSQSSH) has biased composition (polar residues). Positions 722 to 797 (PVRCLEPARP…PPVRAVDNAD (76 aa)) constitute an HSA domain. The Myb-like domain occupies 985–1045 (FESRIASQWT…ECFERWVNLE (61 aa)). 2 stretches are compositionally biased toward low complexity: residues 1320–1330 (VAVQLQQQQHQ) and 1336–1406 (QHPQ…QVTQ). Disordered regions lie at residues 1320–1428 (VAVQ…PMRP), 1622–1644 (MQTQTPAHQPHQPQAQPHVQAQA), 1663–1831 (QKQA…GQVQ), and 1846–2189 (VQGQ…APTK). Low complexity-rich tracts occupy residues 1663 to 1808 (QKQA…QGQG), 1818 to 1831 (GQGHAQGQVQGQVQ), 1846 to 1863 (VQGQVQGQAPGQVQPQHA), 1873 to 2089 (QHAQ…QPQQ), and 2097 to 2189 (SQPQ…APTK).

The protein belongs to the EAF1 family. Component of the NuA4 histone acetyltransferase complex.

The protein resides in the nucleus. Component of the NuA4 histone acetyltransferase complex which is involved in transcriptional activation of selected genes principally by acetylation of nucleosomal histone H4 and H2A. The NuA4 complex is also involved in DNA repair. The sequence is that of Chromatin modification-related protein eaf-1 (eaf-1) from Neurospora crassa (strain ATCC 24698 / 74-OR23-1A / CBS 708.71 / DSM 1257 / FGSC 987).